The following is a 373-amino-acid chain: Unsaturated rhamnogalacturonyl hydrolase YteR (373 aa).

Residues 40-41, D88, and 132-136 each bind substrate; these read HY and HKDGY. D143 functions as the Proton donor in the catalytic mechanism. Substrate-binding positions include 213–217 and 333–334; these read RSIGW and TS.

Belongs to the glycosyl hydrolase 105 family. In terms of assembly, monomer.

It localises to the cytoplasm. The catalysed reaction is 2-O-(4-deoxy-beta-L-threo-hex-4-enopyranuronosyl)-alpha-L-rhamnose + H2O = 5-dehydro-4-deoxy-D-glucuronate + L-rhamnopyranose. In terms of biological role, catalyzes the hydrolysis of unsaturated rhamnogalacturonan disaccharide to yield unsaturated D-galacturonic acid and L-rhamnose. It cannot act on unsaturated glucuronyl hydrolase (UGL) substrates containing unsaturated D-glucuronic acid at the non-reducing terminus, although the active pockets of YesR and UGL are very similar. This is Unsaturated rhamnogalacturonyl hydrolase YteR (yteR) from Bacillus subtilis (strain 168).